Reading from the N-terminus, the 156-residue chain is Probable cyclic pyranopterin monophosphate synthase (156 aa).

Substrate contacts are provided by residues Leu73–His75 and Met109–Glu110. Residue Asp124 is part of the active site.

It belongs to the MoaC family. In terms of assembly, homohexamer; trimer of dimers.

The enzyme catalyses (8S)-3',8-cyclo-7,8-dihydroguanosine 5'-triphosphate = cyclic pyranopterin phosphate + diphosphate. It participates in cofactor biosynthesis; molybdopterin biosynthesis. In terms of biological role, catalyzes the conversion of (8S)-3',8-cyclo-7,8-dihydroguanosine 5'-triphosphate to cyclic pyranopterin monophosphate (cPMP). The chain is Probable cyclic pyranopterin monophosphate synthase from Pyrococcus furiosus (strain ATCC 43587 / DSM 3638 / JCM 8422 / Vc1).